Here is a 115-residue protein sequence, read N- to C-terminus: SPbeta prophage-derived uncharacterized membrane protein YosE (115 aa).

Helical transmembrane passes span 20-42, 58-78, and 95-115; these read IVVG…YGLN, VHVT…FVKG, and GKSL…TLFI.

The protein resides in the cell membrane. This is SPbeta prophage-derived uncharacterized membrane protein YosE (yosE) from Bacillus subtilis (strain 168).